Here is a 692-residue protein sequence, read N- to C-terminus: Glycine--tRNA ligase beta subunit (692 aa).

It belongs to the class-II aminoacyl-tRNA synthetase family. In terms of assembly, tetramer of two alpha and two beta subunits.

Its subcellular location is the cytoplasm. It catalyses the reaction tRNA(Gly) + glycine + ATP = glycyl-tRNA(Gly) + AMP + diphosphate. This is Glycine--tRNA ligase beta subunit from Limosilactobacillus fermentum (strain NBRC 3956 / LMG 18251) (Lactobacillus fermentum).